A 3021-amino-acid polypeptide reads, in one-letter code: Genome polyprotein (3021 aa).

An N-acetylserine; by host modification is found at S2. Residues 2–23 are interaction with STAT1; it reads STLPKPQRKTKRNTIRRPQDVK. Residues 2 to 58 are interaction with EIF2AK2/PKR; sequence STLPKPQRKTKRNTIRRPQDVKFPGGGQIVGGVYVLPRRGPRLGVRATRKTSERSQP. Residues 2-59 are interaction with DDX3X; that stretch reads STLPKPQRKTKRNTIRRPQDVKFPGGGQIVGGVYVLPRRGPRLGVRATRKTSERSQPR. A disordered region spans residues 2–75; that stretch reads STLPKPQRKT…PKARRSEGRS (74 aa). Over 2-168 the chain is Cytoplasmic; it reads STLPKPQRKT…EDGINFATGN (167 aa). 2 short sequence motifs (nuclear localization signal) span residues 5–13 and 38–43; these read PKPQRKTKR and PRRGPR. A compositionally biased stretch (basic residues) spans 7 to 16; that stretch reads PQRKTKRNTI. Residue S53 is modified to Phosphoserine; by host. 2 consecutive short sequence motifs (nuclear localization signal) follow at residues 58–64 and 66–71; these read PRGRRQP and PKARRS. Positions 58-68 are enriched in basic residues; it reads PRGRRQPIPKA. The residue at position 99 (S99) is a Phosphoserine; by host. Positions 112 to 152 are important for endoplasmic reticulum and mitochondrial localization; that stretch reads PRRRSRNLGKVIDTLTCGFADLMGYIPLVGAPVGGVARALA. The residue at position 116 (S116) is a Phosphoserine; by host PKA. Residues 122 to 173 are interaction with APOA2; sequence VIDTLTCGFADLMGYIPLVGAPVGGVARALAHGVRALEDGINFATGNLPGCS. Residues 164–167 form an important for lipid droplets localization region; the sequence is FATG. A helical transmembrane segment spans residues 169–189; sequence LPGCSFSIFLLALFSCLIHPA. The propeptide at 178 to 191 is ER anchor for the core protein, removed in mature form by host signal peptidase; that stretch reads LLALFSCLIHPAAS. Residues 190–358 are Lumenal-facing; it reads ASLEWRNTSG…AGAHWGILAG (169 aa). 3 N-linked (GlcNAc...) asparagine; by host glycosylation sites follow: N196, N209, and N234. Residues 265 to 296 form an important for fusion region; it reads LVGAATMCSALYVGDMCGAVFLVGQAFTFRPR. A glycan (N-linked (GlcNAc...) asparagine; by host) is linked at N305. A helical transmembrane segment spans residues 359-379; that stretch reads LAYYSMQGNWAKVAIIMVMFS. Topologically, residues 380–731 are lumenal; the sequence is GVDAHTYTTG…WEFVILVFLL (352 aa). An HVR1 region spans residues 385–412; the sequence is TYTTGGTASRHTQAFAGLFDIGPQQKLQ. Residues N417, N423, and N430 are each glycosylated (N-linked (GlcNAc...) (high mannose) asparagine; by host). 4 disulfides stabilise this stretch: C429-C553, C452-C459, C487-C495, and C504-C509. Residue N448 is glycosylated (N-linked (GlcNAc...) asparagine; by host). Residues 474–479 form an HVR2 region; sequence DANITG. N-linked (GlcNAc...) asparagine; by host glycosylation is present at N476. The interval 481–494 is CD81-binding 1; sequence SDDRPYCWHYAPRP. N533 is a glycosylation site (N-linked (GlcNAc...) asparagine; by host). The segment at 545–552 is CD81-binding 2; the sequence is PPSGRWFG. The N-linked (GlcNAc...) asparagine; by host glycan is linked to N557. C565 and C570 form a disulfide bridge. The N-linked (GlcNAc...) asparagine; by host glycan is linked to N578. 3 disulfides stabilise this stretch: C587-C591, C603-C626, and C613-C650. N-linked (GlcNAc...) (high mannose) asparagine; by host glycosylation occurs at N651. C658 and C683 are joined by a disulfide. Residues 666 to 677 are PKR/eIF2-alpha phosphorylation homology domain (PePHD); that stretch reads SEQHPLLHSTTE. Residues 732–752 traverse the membrane as a helical segment; the sequence is LADARVCVALWLMLMISQTEA. At 753–763 the chain is on the lumenal side; it reads ALENLVTLNAV. Residues 764-784 traverse the membrane as a helical segment; sequence AAAGTHGIGWYLVAFCAAWYV. The Cytoplasmic portion of the chain corresponds to 785-787; sequence RGK. Residues 788–809 traverse the membrane as a helical segment; sequence LVPLVTYSLTGLWSLALLVLLL. The Lumenal segment spans residues 810 to 819; the sequence is PQRAYAWSGE. A helical transmembrane segment spans residues 820–840; that stretch reads DSATLGAGVLVLFGFFTLSPW. The Cytoplasmic segment spans residues 841–844; sequence YKHW. A helical membrane pass occupies residues 845–864; the sequence is IGRLMWWNQYTICRCESALH. Over 865–887 the chain is Lumenal; it reads VWVPPLLARGSRDGVILLTSLLY. A helical transmembrane segment spans residues 888 to 908; it reads PSLIFDITKLLMAVLGPLYLI. A Peptidase C18 domain is found at 905–1032; that stretch reads LYLIQATITT…DYREMGWRLL (128 aa). Over 909 to 1663 the chain is Cytoplasmic; that stretch reads QATITTTPYF…CMSADLEVTT (755 aa). The segment at 910-1212 is protease NS2-3; it reads ATITTTPYFV…PVETLSTQAR (303 aa). Residue C928 is the site of S-palmitoyl cysteine; by host attachment. An interaction with host SCPS1 region spans residues 935 to 955; that stretch reads IGGKYFQMIILSIGRWFNTYL. Residues H958, E978, and C999 each act as for protease NS2 activity; shared with dimeric partner in the active site. Positions 1033–1214 constitute a Peptidase S29 domain; sequence APITAYAQQT…ETLSTQARSP (182 aa). Catalysis depends on charge relay system; for serine protease NS3 activity residues H1089 and D1113. C1129 and C1131 together coordinate Zn(2+). S1171 acts as the Charge relay system; for serine protease NS3 activity in catalysis. Zn(2+) contacts are provided by C1177 and H1181. The Helicase ATP-binding domain maps to 1223–1375; that stretch reads PAVPQSYQVG…SNIEEVALGS (153 aa). 1236-1243 is an ATP binding site; the sequence is APTGSGKS. Mg(2+) contacts are provided by S1243 and E1323. A DECH box motif is present at residues 1322–1325; the sequence is DECH. The Helicase C-terminal domain maps to 1382–1544; that stretch reads YGKAIPIALL…DLQPAETTVR (163 aa). The tract at residues 1492–1504 is RNA-binding; the sequence is QRRGRTGRGRLGT. The helical transmembrane segment at 1664–1684 threads the bilayer; that stretch reads STWVLLGGVLAALAAYCLSVG. An NS3-binding region spans residues 1685 to 1696; that stretch reads CVVIVGHIELEG. Over 1685–1811 the chain is Cytoplasmic; sequence CVVIVGHIEL…SVTSPLTTNQ (127 aa). Residues 1812–1830 form a helical membrane-spanning segment; that stretch reads TMFFNILGGWVATHLAGPQ. The Lumenal portion of the chain corresponds to 1831 to 1834; the sequence is SSSA. Residues 1835–1855 traverse the membrane as a helical segment; it reads FVVSGLAGAAIGGIGLGRVLL. D1856 is a topological domain (cytoplasmic). A helical membrane pass occupies residues 1857–1877; sequence ILAGYGAGVSGALVAFKIMGG. Residues 1878 to 1887 lie on the Lumenal side of the membrane; that stretch reads ECPTAEDMVN. Residues 1888 to 1908 form a helical membrane-spanning segment; that stretch reads LLPAILSPGALVVGVICAAIL. The Cytoplasmic portion of the chain corresponds to 1909–1978; the sequence is RRHVGPGEGA…WINEDYPSPC (70 aa). A lipid anchor (S-palmitoyl cysteine; by host) is attached at C1978. Residues 1979–2008 lie within the membrane without spanning it; it reads SDDWLRTIWDWVCSVLADFKAWLSAKIMPA. Residues 2009–3000 lie on the Cytoplasmic side of the membrane; the sequence is LPGLPFISCQ…YHSVSRARTR (992 aa). Residues C2017, C2035, C2037, and C2058 each coordinate Zn(2+). Residues 2126–2214 form an FKBP8-binding region; it reads EFFTEVDGVR…ASSSASQLSA (89 aa). The transcriptional activation stretch occupies residues 2126 to 2338; the sequence is EFFTEVDGVR…PVPPPRRKRT (213 aa). The interval 2141–2145 is interaction with non-structural protein 4A; that stretch reads PPCKP. Residues 2193–2215 form a disordered region; that stretch reads ARRLARGSPPSEASSSASQLSAP. The interaction with host SKP2 stretch occupies residues 2195–2448; sequence RLARGSPPSE…ALITPCSAEE (254 aa). Phosphoserine; by host occurs at positions 2200, 2203, 2207, 2210, 2213, and 2216. Positions 2200 to 2215 are enriched in low complexity; the sequence is SPPSEASSSASQLSAP. The segment at 2216–2255 is ISDR; the sequence is SLKATCQTHRPHPDAELVDANLLWRQEMGSNITRVESETK. The tract at residues 2216 to 2281 is interaction with EIF2AK2/PKR; it reads SLKATCQTHR…VEPSVAAECF (66 aa). The NS4B-binding stretch occupies residues 2255–2312; it reads KVVVLDSFEPLRAETDDVEPSVAAECFKKPPKYPPALPIWARPDYNPPLLDRWKAPDY. The tract at residues 2305 to 2387 is V3; the sequence is DRWKAPDYVP…STTSKVPPSP (83 aa). Positions 2328 to 2331 match the SH3-binding motif; that stretch reads PPVP. A Nuclear localization signal motif is present at residues 2333-2341; that stretch reads PRRKRTIQL. A Glycyl lysine isopeptide (Lys-Gly) (interchain with G-Cter in ubiquitin) cross-link involves residue K2356. Residues 2356–2417 are disordered; it reads KSFPSSKPQE…DPDLSCDSWS (62 aa). 2 stretches are compositionally biased toward low complexity: residues 2359–2381 and 2388–2401; these read PSSK…STTS and GGES…SMPP. Phosphoserine; by host occurs at positions 2459 and 2472. Positions 2644–2762 constitute a RdRp catalytic domain; the sequence is PLGFSYDTRC…VAESDGVDED (119 aa). Residues D2650, D2748, and D2749 each coordinate Mg(2+). The helical transmembrane segment at 3001–3021 threads the bilayer; that stretch reads HLLLCLLLLTVGVGIFLLPAR.

Belongs to the hepacivirus polyprotein family. Homooligomer. Interacts with E1 (via C-terminus). Interacts with the non-structural protein 5A. Interacts (via N-terminus) with host STAT1 (via SH2 domain); this interaction results in decreased STAT1 phosphorylation and ubiquitin-mediated proteasome-dependent STAT1 degradation, leading to decreased IFN-stimulated gene transcription. Interacts with host STAT3; this interaction constitutively activates STAT3. Interacts with host LTBR receptor. Interacts with host TNFRSF1A receptor and possibly induces apoptosis. Interacts with host HNRPK. Interacts with host YWHAE. Interacts with host UBE3A/E6AP. Interacts with host DDX3X. Interacts with host APOA2. Interacts with host RXRA protein. Interacts with host SP110 isoform 3/Sp110b; this interaction sequesters the transcriptional corepressor SP110 away from the nucleus. Interacts with host CREB3 nuclear transcription protein; this interaction triggers cell transformation. Interacts with host ACY3. Interacts with host C1QR1. Interacts with host RBM24; this interaction, which enhances the interaction of the mature core protein with 5'-UTR, may inhibit viral translation and favor replication. Interacts with host EIF2AK2/PKR; this interaction induces the autophosphorylation of EIF2AK2. Part of the viral assembly initiation complex composed of NS2, E1, E2, NS3, NS4A, NS5A and the mature core protein. As to quaternary structure, forms a heterodimer with envelope glycoprotein E2. Interacts with mature core protein. Interacts with protease NS2. The heterodimer E1/E2 interacts with host CLDN1; this interaction plays a role in viral entry into host cell. Interacts with host SPSB2 (via C-terminus). Part of the viral assembly initiation complex composed of NS2, E1, E2, NS3, NS4A, NS5A and the mature core protein. Interacts with host NEURL3; this interaction prevents E1 binding to glycoprotein E2. In terms of assembly, forms a heterodimer with envelope glycoprotein E1. Interacts with host CD81 and SCARB1 receptors; these interactions play a role in viral entry into host cell. Interacts with host EIF2AK2/PKR; this interaction inhibits EIF2AK2 and probably allows the virus to evade the innate immune response. Interacts with host CD209/DC-SIGN and CLEC4M/DC-SIGNR. Interact with host SPCS1; this interaction is essential for viral particle assembly. Interacts with protease NS2. The heterodimer E1/E2 interacts with host CLDN1; this interaction plays a role in viral entry into host cell. Part of the viral assembly initiation complex composed of NS2, E1, E2, NS3, NS4A, NS5A and the mature core protein. Interacts with host SLC3A2/4F2hc; the interaction may facilitate viral entry into host cell. Interacts with human PLSCR1. Homohexamer. Homoheptamer. Interacts with protease NS2. As to quaternary structure, homodimer. Interacts with host SPCS1; this interaction is essential for viral particle assembly. Interacts with envelope glycoprotein E1. Interacts with envelope glycoprotein E2. Interacts with viroporin p7. Interacts with serine protease/helicase NS3. Part of the replication complex composed of NS2, NS3, NS4A, NS4B, NS5A and the RNA-directed RNA polymerase embedded in an ER-derived membranous web. Part of the viral assembly initiation complex composed of NS2, E1, E2, NS3, NS4A, NS5A and the mature core protein. In terms of assembly, interacts with protease NS2. Interacts with non-structural protein 4A; this interaction stabilizes the folding of NS3 serine protease. NS3-NS4A interaction is essential for NS3 activation and allows membrane anchorage of the latter. NS3/NS4A complex also prevents phosphorylation of host IRF3, thus preventing the establishment of dsRNA induced antiviral state. Interacts with host MAVS; this interaction leads to the cleavage and inhibition of host MAVS. Interacts with host TICAM1; this interaction leads to the cleavage and inhibition of host TICAM1. Interacts with host TANK-binding kinase/TBK1; this interaction results in the inhibition of the association between TBK1 and IRF3, which leads to the inhibition of IRF3 activation. Interacts with host RBM24. Part of the replication complex composed of NS2, NS3, NS4A, NS4B, NS5A and the RNA-directed RNA polymerase embedded in an ER-derived membranous web. Part of the viral assembly initiation complex composed of NS2, E1, E2, NS3, NS4A, NS5A and the mature core protein. Interacts with NS3 serine protease; this interaction stabilizes the folding of NS3 serine protease. NS3-NS4A interaction is essential for NS3 activation and allows membrane anchorage of the latter. Interacts with non-structural protein 5A (via N-terminus). Part of the replication complex composed of NS2, NS3, NS4A, NS4B, NS5A and the RNA-directed RNA polymerase embedded in an ER-derived membranous web. Part of the viral assembly initiation complex composed of NS2, E1, E2, NS3, NS4A, NS5A and the mature core protein. As to quaternary structure, homomultimer. Interacts with non-structural protein NS5A. Interacts with host PLA2G4C; this interaction likely initiates the recruitment of replication complexes to lipid droplets. Interacts with host STING; this interaction disrupts the interaction between STING and TBK1 thereby suppressing the interferon signaling. Part of the replication complex composed of NS2, NS3, NS4A, NS4B, NS5A and the RNA-directed RNA polymerase embedded in an ER-derived membranous web. In terms of assembly, monomer. Homodimer; dimerization is required for RNA-binding. Interacts with the mature core protein. Interacts (via N-terminus) with non-structural protein 4A. Interacts with non-structural protein 4B. Interacts (via region D2) with RNA-directed RNA polymerase. Part of the viral assembly initiation complex composed of NS2, E1, E2, NS3, NS4A, NS5A and the mature core protein. Part of the replication complex composed of NS2, NS3, NS4A, NS4B, NS5A and the RNA-directed RNA polymerase embedded in an ER-derived membranous web. Interacts with host GRB2. Interacts with host BIN1. Interacts with host PIK3R1. Interacts with host SRCAP. Interacts with host FKBP8. Interacts (via C-terminus) with host VAPB (via MSP domain). Interacts with host EIF2AK2/PKR; this interaction leads to disruption of EIF2AK2 dimerization by NS5A and probably allows the virus to evade the innate immune response. Interacts (via N-terminus) with host PACSIN2 (via N-terminus); this interaction attenuates protein kinase C alpha-mediated phosphorylation of PACSIN2 by disrupting the interaction between PACSIN2 and PRKCA. Interacts (via N-terminus) with host SRC kinase (via SH2 domain). Interacts with most Src-family kinases. Interacts with host IFI27 and SKP2; promotes the ubiquitin-mediated proteasomal degradation of NS5A. Interacts with host GPS2. Interacts with host TNFRSF21; this interaction allows the modulation by the virus of JNK, p38 MAPK, STAT3, and Akt signaling pathways in a DR6-dependent manner. Interacts (via N-terminus) with host CIDEB (via N-terminus); this interaction seems to regulate the association of HCV particles with APOE. Interacts with host CHKA/Choline Kinase-alpha; CHKA bridges host PI4KA and NS5A and potentiates NS5A-stimulated PI4KA activity, which then facilitates the targeting of the ternary complex to the ER for viral replication. Interacts with host SPSB2 (via C-terminus); this interaction targets NS5A for ubiquitination and degradation. Interacts with host RAB18; this interaction may promote the association of NS5A and other replicase components with lipid droplets. Interacts (via region D2) with host PPIA/CYPA; the interaction stimulates RNA-binding ability of NS5A and is dependent on the peptidyl-prolyl cis-trans isomerase activity of PPIA/CYPA. Interacts with host TRIM14; this interaction induces the degradation of NS5A. Homooligomer. Interacts with non-structural protein 5A. Interacts with host VAPB. Interacts with host PRK2/PKN2. Interacts with host HNRNPA1 and SEPT6; these interactions facilitate viral replication. Part of the replication complex composed of NS2, NS3, NS4A, NS4B, NS5A and the RNA-directed RNA polymerase. Zn(2+) is required as a cofactor. Requires Mg(2+) as cofactor. Specific enzymatic cleavages in vivo yield mature proteins. The structural proteins, core, E1, E2 and p7 are produced by proteolytic processing by host signal peptidases. The core protein precursor is synthesized as a 23 kDa, which is retained in the ER membrane through the hydrophobic signal peptide. Cleavage by the signal peptidase releases the 21 kDa mature core protein. The cleavage of the core protein precursor occurs between aminoacids 176 and 188 but the exact cleavage site is not known. Some degraded forms of the core protein appear as well during the course of infection. The other proteins (p7, NS2, NS3, NS4A, NS4B, NS5A and NS5B) are cleaved by the viral proteases. Autoprocessing between NS2 and NS3 is mediated by the NS2 cysteine protease catalytic domain and regulated by the NS3 N-terminal domain. In terms of processing, phosphorylated by host PKC and PKA. Post-translationally, ubiquitinated; mediated by UBE3A and leading to core protein subsequent proteasomal degradation. Highly N-glycosylated. In terms of processing, palmitoylation is required for NS2/3 autoprocessing and E2 recruitment to membranes. Post-translationally, palmitoylated. This modification may play a role in its polymerization or in protein-protein interactions. Phosphorylated on serines in a basal form termed p56. p58 is a hyperphosphorylated form of p56. p56 and p58 coexist in the cell in roughly equivalent amounts. Hyperphosphorylation is dependent on the presence of NS4A. Host CSNK1A1/CKI-alpha or RPS6KB1 kinases may be responsible for NS5A phosphorylation. In terms of processing, tyrosine phosphorylation is essential for the interaction with host SRC. Post-translationally, ubiquitinated. Ubiquitination, most probably at Lys-2350, mediated by host IFI27 and SKP2 leads to proteasomal degradation, restricting viral infection. Ubiquitination by host TRIM22 leads to interruption of viral replication. The N-terminus is phosphorylated by host PRK2/PKN2.

The protein resides in the host endoplasmic reticulum membrane. It is found in the host mitochondrion membrane. Its subcellular location is the virion. The protein localises to the host cytoplasm. It localises to the host nucleus. The protein resides in the host lipid droplet. It is found in the virion membrane. Its subcellular location is the host mitochondrion. The protein localises to the host cell membrane. It localises to the host perinuclear region. The enzyme catalyses Hydrolysis of four peptide bonds in the viral precursor polyprotein, commonly with Asp or Glu in the P6 position, Cys or Thr in P1 and Ser or Ala in P1'.. The catalysed reaction is a ribonucleoside 5'-triphosphate + H2O = a ribonucleoside 5'-diphosphate + phosphate + H(+). It catalyses the reaction ATP + H2O = ADP + phosphate + H(+). It carries out the reaction RNA(n) + a ribonucleoside 5'-triphosphate = RNA(n+1) + diphosphate. Its activity is regulated as follows. Inhibited by the antiviral drug hexamethylene amiloride. Inhibition by amantadine appears to be genotype-dependent. Also inhibited by long-alkyl-chain iminosugar derivatives. Activity is up-regulated by PRK2/PKN2-mediated phosphorylation. Its function is as follows. Packages viral RNA to form a viral nucleocapsid, and promotes virion budding. Participates in the viral particle production as a result of its interaction with the non-structural protein 5A. Binds RNA and may function as a RNA chaperone to induce the RNA structural rearrangements taking place during virus replication. Modulates viral translation initiation by interacting with viral IRES and 40S ribosomal subunit. Affects various cell signaling pathways, host immunity and lipid metabolism. Prevents the establishment of cellular antiviral state by blocking the interferon-alpha/beta (IFN-alpha/beta) and IFN-gamma signaling pathways and by blocking the formation of phosphorylated STAT1 and promoting ubiquitin-mediated proteasome-dependent degradation of STAT1. Activates STAT3 leading to cellular transformation. Regulates the activity of cellular genes, including c-myc and c-fos. May repress the promoter of p53, and sequester CREB3 and SP110 isoform 3/Sp110b in the cytoplasm. Represses cell cycle negative regulating factor CDKN1A, thereby interrupting an important check point of normal cell cycle regulation. Targets transcription factors involved in the regulation of inflammatory responses and in the immune response: suppresses TNF-induced NF-kappa-B activation, and activates AP-1. Binds to dendritic cells (DCs) via C1QR1, resulting in down-regulation of T-lymphocytes proliferation. Alters lipid metabolism by interacting with hepatocellular proteins involved in lipid accumulation and storage. Induces up-regulation of FAS promoter activity, and thereby contributes to the increased triglyceride accumulation in hepatocytes (steatosis). Functionally, forms a heterodimer with envelope glycoprotein E2, which mediates virus attachment to the host cell, virion internalization through clathrin-dependent endocytosis and fusion with host membrane. Fusion with the host cell is most likely mediated by both E1 and E2, through conformational rearrangements of the heterodimer required for fusion rather than a classical class II fusion mechanism. E1/E2 heterodimer binds host apolipoproteins such as APOB and ApoE thereby forming a lipo-viro-particle (LVP). APOE associated to the LVP allows the initial virus attachment to cell surface receptors such as the heparan sulfate proteoglycans (HSPGs), syndecan-1 (SDC1), syndecan-1 (SDC2), the low-density lipoprotein receptor (LDLR) and scavenger receptor class B type I (SCARB1). The cholesterol transfer activity of SCARB1 allows E2 exposure and binding of E2 to SCARB1 and the tetraspanin CD81. E1/E2 heterodimer binding on CD81 activates the epithelial growth factor receptor (EGFR) signaling pathway. Diffusion of the complex E1-E2-EGFR-SCARB1-CD81 to the cell lateral membrane allows further interaction with Claudin 1 (CLDN1) and occludin (OCLN) to finally trigger HCV entry. In terms of biological role, forms a heterodimer with envelope glycoprotein E1, which mediates virus attachment to the host cell, virion internalization through clathrin-dependent endocytosis and fusion with host membrane. Fusion with the host cell is most likely mediated by both E1 and E2, through conformational rearrangements of the heterodimer required for fusion rather than a classical class II fusion mechanism. The interaction between envelope glycoprotein E2 and host apolipoprotein E/APOE allows the proper assembly, maturation and infectivity of the viral particles. This interaction is probably promoted via the up-regulation of cellular autophagy by the virus. E1/E2 heterodimer binds host apolipoproteins such as APOB and APOE thereby forming a lipo-viro-particle (LVP). APOE associated to the LVP allows the initial virus attachment to cell surface receptors such as the heparan sulfate proteoglycans (HSPGs), syndecan-1 (SDC1), syndecan-1 (SDC2), the low-density lipoprotein receptor (LDLR) and scavenger receptor class B type I (SCARB1). The cholesterol transfer activity of SCARB1 allows E2 exposure and binding of E2 to SCARB1 and the tetraspanin CD81. E1/E2 heterodimer binding on CD81 activates the epithelial growth factor receptor (EGFR) signaling pathway. Diffusion of the complex E1-E2-EGFR-SCARB1-CD81 to the cell lateral membrane allows further interaction with Claudin 1 (CLDN1) and occludin (OCLN) to finally trigger HCV entry. Inhibits host EIF2AK2/PKR activation, preventing the establishment of an antiviral state. Viral ligand for CD209/DC-SIGN and CLEC4M/DC-SIGNR, which are respectively found on dendritic cells (DCs), and on liver sinusoidal endothelial cells and macrophage-like cells of lymph node sinuses. These interactions allow the capture of circulating HCV particles by these cells and subsequent facilitated transmission to permissive cells such as hepatocytes and lymphocyte subpopulations. The interaction between E2 and host amino acid transporter complex formed by SLC3A2 and SLC7A5/LAT1 may facilitate viral entry into host cell. Ion channel protein that acts as a viroporin and plays an essential role in the assembly, envelopment and secretion of viral particles. Regulates the host cell secretory pathway, which induces the intracellular retention of viral glycoproteins and favors assembly of viral particles. Creates a pore in acidic organelles and releases Ca(2+) and H(+) in the cytoplasm of infected cells, leading to a productive viral infection. High levels of cytoplasmic Ca(2+) may trigger membrane trafficking and transport of viral ER-associated proteins to viroplasms, sites of viral genome replication. This ionic imbalance induces the assembly of the inflammasome complex, which triggers the maturation of pro-IL-1beta into IL-1beta through the action of caspase-1. Targets also host mitochondria and induces mitochondrial depolarization. In addition of its role as a viroporin, acts as a lipid raft adhesion factor. Its function is as follows. Cysteine protease required for the proteolytic auto-cleavage between the non-structural proteins NS2 and NS3. The N-terminus of NS3 is required for the function of NS2 protease (active region NS2-3). Promotes the initiation of viral particle assembly by mediating the interaction between structural and non-structural proteins. Functionally, displays three enzymatic activities: serine protease with a chymotrypsin-like fold, NTPase and RNA helicase. NS3 serine protease, in association with NS4A, is responsible for the cleavages of NS3-NS4A, NS4A-NS4B, NS4B-NS5A and NS5A-NS5B. The NS3/NS4A complex prevents phosphorylation of host IRF3, thus preventing the establishment of dsRNA induced antiviral state. The NS3/NS4A complex induces host amino acid transporter component SLC3A2, thus contributing to HCV propagation. NS3 RNA helicase binds to RNA and unwinds both dsDNA and dsRNA in the 3' to 5' direction, and likely resolves RNA complicated stable secondary structures in the template strand. Binds a single ATP and catalyzes the unzipping of a single base pair of dsRNA. Inhibits host antiviral proteins TBK1 and IRF3 thereby preventing the establishment of an antiviral state. Cleaves host MAVS/CARDIF thereby preventing the establishment of an antiviral state. Cleaves host TICAM1/TRIF, thereby disrupting TLR3 signaling and preventing the establishment of an antiviral state. In terms of biological role, peptide cofactor which forms a non-covalent complex with the N-terminal of NS3 serine protease. The NS3/NS4A complex prevents phosphorylation of host IRF3, thus preventing the establishment of dsRNA induced antiviral state. The NS3/NS4A complex induces host amino acid transporter component SLC3A2, thus contributing to HCV propagation. Induces a specific membrane alteration that serves as a scaffold for the virus replication complex. This membrane alteration gives rise to the so-called ER-derived membranous web that contains the replication complex. NS4B self-interaction contributes to its function in membranous web formation. Promotes host TRIF protein degradation in a CASP8-dependent manner thereby inhibiting host TLR3-mediated interferon signaling. Disrupts the interaction between STING and TBK1 contributing to the inhibition of interferon signaling. Its function is as follows. Phosphorylated protein that is indispensable for viral replication and assembly. Both hypo- and hyperphosphorylated states are required for the viral life cycle. The hyperphosphorylated form of NS5A is an inhibitor of viral replication. Involved in RNA-binding and especially in binding to the viral genome. Zinc is essential for RNA-binding. Participates in the viral particle production as a result of its interaction with the mature viral core protein. Its interaction with host VAPB may target the viral replication complex to vesicles. Down-regulates viral IRES translation initiation. Mediates interferon resistance, presumably by interacting with and inhibiting host EIF2AK2/PKR. Prevents BIN1-induced apoptosis. Acts as a transcriptional activator of some host genes important for viral replication when localized in the nucleus. Via the interaction with host PACSIN2, modulates lipid droplet formation in order to promote virion assembly. Modulates TNFRSF21/DR6 signaling pathway for viral propagation. Functionally, RNA-dependent RNA polymerase that performs primer-template recognition and RNA synthesis during viral replication. Initiates RNA transcription/replication at a flavin adenine dinucleotide (FAD), resulting in a 5'- FAD cap on viral RNAs. In this way, recognition of viral 5' RNA by host pattern recognition receptors can be bypassed, thereby evading activation of antiviral pathways. The chain is Genome polyprotein from Homo sapiens (Human).